A 158-amino-acid polypeptide reads, in one-letter code: Transcription factor bHLH146 (158 aa).

Residues 77–90 are compositionally biased toward low complexity; sequence SSSSNPTTTTSSSS. The tract at residues 77-110 is disordered; that stretch reads SSSSNPTTTTSSSSDGIRILERPDKEGGNEEGGI. Basic and acidic residues predominate over residues 94–110; the sequence is RILERPDKEGGNEEGGI. The 50-residue stretch at 94 to 143 folds into the bHLH; atypical domain; sequence RILERPDKEGGNEEGGIEERLRELKKLLPGGEEMNVEEMLSEIGNYIKCL.

It belongs to the bHLH protein family.

Its subcellular location is the nucleus. The protein is Transcription factor bHLH146 (BHLH146) of Arabidopsis thaliana (Mouse-ear cress).